A 329-amino-acid polypeptide reads, in one-letter code: tRNA pseudouridine synthase B (329 aa).

Aspartate 42 (nucleophile) is an active-site residue.

The protein belongs to the pseudouridine synthase TruB family. Type 1 subfamily.

The catalysed reaction is uridine(55) in tRNA = pseudouridine(55) in tRNA. In terms of biological role, responsible for synthesis of pseudouridine from uracil-55 in the psi GC loop of transfer RNAs. The polypeptide is tRNA pseudouridine synthase B (Lactococcus lactis subsp. lactis (strain IL1403) (Streptococcus lactis)).